The chain runs to 492 residues: Catalase-3 (492 aa).

Catalysis depends on residues histidine 65 and asparagine 138. Residue tyrosine 348 participates in heme binding.

This sequence belongs to the catalase family. Homotetramer and heterotetramer. At least six or seven isozymes are produced from a mixture of 3 gene products. Interacts with NCA1. Interacts with LSD1. Heme serves as cofactor.

The protein localises to the peroxisome. The enzyme catalyses 2 H2O2 = O2 + 2 H2O. Its function is as follows. Occurs in almost all aerobically respiring organisms and serves to protect cells from the toxic effects of hydrogen peroxide. This is Catalase-3 (CAT3) from Arabidopsis thaliana (Mouse-ear cress).